The primary structure comprises 359 residues: MKLKQIELKNFRNYEDLKLDFHPNLNIFLGQNAQGKTNILEAIHFLALTRSHRTSHDKELICWSGQEMKVSGLVEKAHATVPLEVQLSSKGRIAKANHLKENRLADYIGQLKILMFAPENLELVKGSPATRRRFMDIELGQIHAVYLYDSMRYNRALKERNAYLKFDQAKIDKNFLTVLDEQLAEHGNKIMFERKTFIEKLEIHAKKIHEQLTHGLETLKITYNQNVKTDFSKELLSRQDHDIFRHQTTVGPHRDDLQFFINEINVADFGSQGQQRTVALSIKLAEIDLIFEETGEYPILLLDDVMSELDNHRQLDLIETSLGKTQTFITTTTLDHLKNLPENLSIFHVTDGTIEKEKE.

30-37 (GQNAQGKT) contacts ATP.

The protein belongs to the RecF family.

The protein localises to the cytoplasm. The RecF protein is involved in DNA metabolism; it is required for DNA replication and normal SOS inducibility. RecF binds preferentially to single-stranded, linear DNA. It also seems to bind ATP. This Lactococcus lactis subsp. cremoris (strain SK11) protein is DNA replication and repair protein RecF.